Here is a 210-residue protein sequence, read N- to C-terminus: Uracil phosphoribosyltransferase (210 aa).

5-phospho-alpha-D-ribose 1-diphosphate is bound by residues arginine 78, arginine 103, and aspartate 130–threonine 138. Residues isoleucine 193 and glycine 198–alanine 200 contribute to the uracil site. Aspartate 199 provides a ligand contact to 5-phospho-alpha-D-ribose 1-diphosphate.

It belongs to the UPRTase family. Mg(2+) serves as cofactor.

The enzyme catalyses UMP + diphosphate = 5-phospho-alpha-D-ribose 1-diphosphate + uracil. Its pathway is pyrimidine metabolism; UMP biosynthesis via salvage pathway; UMP from uracil: step 1/1. Allosterically activated by GTP. Functionally, catalyzes the conversion of uracil and 5-phospho-alpha-D-ribose 1-diphosphate (PRPP) to UMP and diphosphate. This is Uracil phosphoribosyltransferase from Stenotrophomonas maltophilia (strain K279a).